The following is a 445-amino-acid chain: Argininosuccinate synthase (445 aa).

ATP-binding positions include 17-25 (AFSGGLDTS) and Ala-43. Position 99 (Tyr-99) interacts with L-citrulline. ATP contacts are provided by Gly-129 and Thr-131. L-aspartate-binding residues include Thr-131, Asn-135, and Asp-136. Asn-135 contacts L-citrulline. ATP is bound at residue Asp-136. The L-citrulline site is built by Arg-139 and Ser-192. Asp-194 contributes to the ATP binding site. Positions 201, 203, and 280 each coordinate L-citrulline.

The protein belongs to the argininosuccinate synthase family. Type 2 subfamily. In terms of assembly, homotetramer.

It is found in the cytoplasm. It catalyses the reaction L-citrulline + L-aspartate + ATP = 2-(N(omega)-L-arginino)succinate + AMP + diphosphate + H(+). The protein operates within amino-acid biosynthesis; L-arginine biosynthesis; L-arginine from L-ornithine and carbamoyl phosphate: step 2/3. The polypeptide is Argininosuccinate synthase (Ralstonia pickettii (strain 12J)).